The sequence spans 107 residues: Ribonuclease P protein component 4 (107 aa).

Cys66, Cys69, Cys92, and Cys95 together coordinate Zn(2+).

It belongs to the eukaryotic/archaeal RNase P protein component 4 family. Consists of a catalytic RNA component and at least 4-5 protein subunits. The cofactor is Zn(2+).

The protein localises to the cytoplasm. It catalyses the reaction Endonucleolytic cleavage of RNA, removing 5'-extranucleotides from tRNA precursor.. In terms of biological role, part of ribonuclease P, a protein complex that generates mature tRNA molecules by cleaving their 5'-ends. This is Ribonuclease P protein component 4 from Methanosarcina barkeri (strain Fusaro / DSM 804).